Here is a 154-residue protein sequence, read N- to C-terminus: NADPH-dependent 7-cyano-7-deazaguanine reductase (154 aa).

Cys-54 (thioimide intermediate) is an active-site residue. Catalysis depends on Asp-61, which acts as the Proton donor. Substrate is bound by residues 76-78 (VES) and 95-96 (HE).

The protein belongs to the GTP cyclohydrolase I family. QueF type 1 subfamily.

It localises to the cytoplasm. It carries out the reaction 7-aminomethyl-7-carbaguanine + 2 NADP(+) = 7-cyano-7-deazaguanine + 2 NADPH + 3 H(+). It functions in the pathway tRNA modification; tRNA-queuosine biosynthesis. Its function is as follows. Catalyzes the NADPH-dependent reduction of 7-cyano-7-deazaguanine (preQ0) to 7-aminomethyl-7-deazaguanine (preQ1). The polypeptide is NADPH-dependent 7-cyano-7-deazaguanine reductase (Porphyromonas gingivalis (strain ATCC 33277 / DSM 20709 / CIP 103683 / JCM 12257 / NCTC 11834 / 2561)).